Reading from the N-terminus, the 259-residue chain is Protein snail homolog Sna (259 aa).

Positions 1 to 20 (MPRSFLVKKHFSASKKPNYS) are SNAG domain. The interval 71-113 (DYKKSPISPSSSDDSSKPLDLTSFSSEDEGGKTSDPPSPASSA) is disordered. 5 C2H2-type zinc fingers span residues 119–141 (FQCN…KQLH), 150–172 (FSCK…IRSH), 176–198 (CVCK…IRTH), 204–226 (FSCT…LQTH), and 232–255 (YQCK…ETGC).

This sequence belongs to the snail C2H2-type zinc-finger protein family. As to quaternary structure, interacts (via SNAG domain) with limd1 (via LIM domains), wtip (via LIM domains) and ajuba (via LIM domains). Interacts with elp3; the interaction inhibits snai1 ubiquitination and promotes snai1 stability. Post-translationally, ubiquitinated. Maternal expression is nearly completely restricted to the vegetal hemisphere. Zygotic expression begins in the dorsal marginal zone just before gastrulation (stage 9), and is almost completely absent in the animal hemisphere. At mid-gastrula (stage 11-11.5), expression begins in the ectoderm in an arc surrounding the prospective neural plate. From stage 12, anterior expression is down-regulated, while levels are increased in the prospective neural crest.

The protein resides in the nucleus. Its function is as follows. Transcriptional repressor. Acts upstream of snai2/slug, zic5 and other neural crest markers in the specification of the neural crest and neural crest migration. Involved in embryonic mesoderm formation. The sequence is that of Protein snail homolog Sna (snai1) from Xenopus laevis (African clawed frog).